We begin with the raw amino-acid sequence, 701 residues long: Heterodisulfide reductase subunit A-like protein (701 aa).

152-175 contacts FAD; sequence GGGIAGIFAALDIANAGYKVYLVE. A 4Fe-4S ferredoxin-type 1 domain is found at 239 to 268; the sequence is KQTWVDWDLCTGCGACTDVCPPKARVPDEF. Cys-248, Cys-251, Cys-254, Cys-326, Cys-627, Cys-630, Cys-633, Cys-637, Cys-660, Cys-663, Cys-666, and Cys-670 together coordinate [4Fe-4S] cluster. 2 consecutive 4Fe-4S ferredoxin-type domains span residues 618-647 and 651-680; these read LVSE…MTKY and MRAE…LHGF.

This sequence belongs to the HdrA family. In terms of assembly, the heterodisulfide reductase is composed of three subunits; HdlA, HdlB and HdlC. It forms a complex with the F420-non-reducing hydrogenase (Mvh), which provides the reducing equivalents to the heterodisulfide reductase. Requires [4Fe-4S] cluster as cofactor. The cofactor is FAD.

It localises to the cytoplasm. Has oxidoreductase activity. The Hdl and Mvh subunits may together mediate electron transfer from hydrogen to an unidentified electron acceptor on the cytoplasmic side of the membrane. In Archaeoglobus profundus (strain DSM 5631 / JCM 9629 / NBRC 100127 / Av18), this protein is Heterodisulfide reductase subunit A-like protein (hdlA).